The primary structure comprises 426 residues: Phosphoribosylamine--glycine ligase (426 aa).

Residues 113 to 320 (KSLMTEAKIP…LLELLYRAST (208 aa)) form the ATP-grasp domain. 139–200 (LESKSIPIVI…EEFMEGQEAS (62 aa)) contributes to the ATP binding site. The Mg(2+) site is built by Glu-290 and Asn-292.

The protein belongs to the GARS family. Requires Mg(2+) as cofactor. Mn(2+) is required as a cofactor.

It carries out the reaction 5-phospho-beta-D-ribosylamine + glycine + ATP = N(1)-(5-phospho-beta-D-ribosyl)glycinamide + ADP + phosphate + H(+). It participates in purine metabolism; IMP biosynthesis via de novo pathway; N(1)-(5-phospho-D-ribosyl)glycinamide from 5-phospho-alpha-D-ribose 1-diphosphate: step 2/2. The sequence is that of Phosphoribosylamine--glycine ligase from Leptospira interrogans serogroup Icterohaemorrhagiae serovar copenhageni (strain Fiocruz L1-130).